Here is a 164-residue protein sequence, read N- to C-terminus: UPF0114 protein YqhA (164 aa).

Helical transmembrane passes span 15-35, 53-73, and 136-156; these read LLAP…LKFF, LILV…LVMV, and LMWY…MGYL.

It belongs to the UPF0114 family.

Its subcellular location is the cell membrane. The protein is UPF0114 protein YqhA of Escherichia coli O139:H28 (strain E24377A / ETEC).